The chain runs to 369 residues: Biglycan (369 aa).

Positions 1-16 (MCPLWLLAALLALSQA) are cleaved as a signal peptide. The propeptide occupies 17 to 37 (LPFEQKAFWDFTLDDGLPMLN). Residues S42 and S48 are each glycosylated (O-linked (Xyl...) (glycosaminoglycan) serine). 2 disulfide bridges follow: C64/C70 and C68/C77. 12 LRR repeats span residues 83–103 (KAVPKEISPDTTLLDLQNNDI), 104–127 (SELRKDDFKGLQHLYALVLVNNKI), 128–151 (SKIHEKAFSPLRKLQKLYISKNHL), 152–172 (VEIPPNLPSSLVELRIHDNRI), 173–196 (RKVPKGVFSGLRNMNCIEMGGNPL), 197–221 (ENSGFEPGAFDGLKLNYLRISEAKL), 222–242 (TGIPKDLPETLNELHLDHNKI), 243–266 (QAIELEDLLRYSKLYRLGLGHNQI), 267–290 (RMIENGSLSFLPTLRELHLDNNKL), 291–313 (SRVPAGLPDLKLLQVVYLHTNNI), 314–343 (TKVGVNDFCPVGFGVKRAYYNGISLFNNPV), and 344–369 (PYWEVQPATFRCVTDRLAIQFGNYKK). Residues N271 and N312 are each glycosylated (N-linked (GlcNAc...) asparagine). Residues C322 and C355 are joined by a disulfide bond.

This sequence belongs to the small leucine-rich proteoglycan (SLRP) family. SLRP class I subfamily. Homodimer. Forms a ternary complex with MFAP2 and ELN. Post-translationally, the two attached glycosaminoglycan chains can be either chondroitin sulfate or dermatan sulfate. As to expression, found in several connective tissues, especially in articular cartilages.

The protein localises to the secreted. The protein resides in the extracellular space. It localises to the extracellular matrix. Functionally, may be involved in collagen fiber assembly. The sequence is that of Biglycan (BGN) from Ovis aries (Sheep).